The primary structure comprises 794 residues: Ent-kaurene synthase 1, chloroplastic (794 aa).

Residues 1 to 28 (MSLLLSNSVLVGPKFRSSRISHASASLD) constitute a chloroplast transit peptide. Mg(2+)-binding residues include Asp543, Asp547, Asn687, and Glu695. The short motif at 543–547 (DDFFD) is the DDXXD motif element.

Belongs to the terpene synthase family. It depends on Mg(2+) as a cofactor. Accumulates in leaves, and, at low levels, in germinating seeds.

It localises to the plastid. The protein resides in the chloroplast. The catalysed reaction is ent-copalyl diphosphate = ent-kaur-16-ene + diphosphate. Its pathway is secondary metabolite biosynthesis; terpenoid biosynthesis. It functions in the pathway plant hormone biosynthesis; gibberellin biosynthesis. In terms of biological role, involved in the biosynthesis of ent-kaurene diterpenoids natural products such as oridonin, miltiradiene, eriocalyxin B and nezukol, known to exhibit antitumor, anti-inflammatory and antibacterial activities, and in the production of gibberellins phytohormones. Catalyzes the conversion of ent-copalyl diphosphate (ent-CPP) to ent-kaurene. The polypeptide is Ent-kaurene synthase 1, chloroplastic (Isodon eriocalyx (Plectranthus eriocalyx)).